Here is a 284-residue protein sequence, read N- to C-terminus: Formamidopyrimidine-DNA glycosylase (284 aa).

Proline 2 serves as the catalytic Schiff-base intermediate with DNA. Glutamate 3 serves as the catalytic Proton donor. Catalysis depends on lysine 58, which acts as the Proton donor; for beta-elimination activity. DNA-binding residues include histidine 97, arginine 120, and arginine 165. The FPG-type zinc-finger motif lies at 250–284 (FVYDRAGEPCKVCGTPVRQIVQGQRSTFYCTHCQH). The Proton donor; for delta-elimination activity role is filled by arginine 274.

This sequence belongs to the FPG family. Monomer. Zn(2+) serves as cofactor.

It carries out the reaction Hydrolysis of DNA containing ring-opened 7-methylguanine residues, releasing 2,6-diamino-4-hydroxy-5-(N-methyl)formamidopyrimidine.. It catalyses the reaction 2'-deoxyribonucleotide-(2'-deoxyribose 5'-phosphate)-2'-deoxyribonucleotide-DNA = a 3'-end 2'-deoxyribonucleotide-(2,3-dehydro-2,3-deoxyribose 5'-phosphate)-DNA + a 5'-end 5'-phospho-2'-deoxyribonucleoside-DNA + H(+). Its function is as follows. Involved in base excision repair of DNA damaged by oxidation or by mutagenic agents. Acts as a DNA glycosylase that recognizes and removes damaged bases. Has a preference for oxidized purines, such as 7,8-dihydro-8-oxoguanine (8-oxoG). Has AP (apurinic/apyrimidinic) lyase activity and introduces nicks in the DNA strand. Cleaves the DNA backbone by beta-delta elimination to generate a single-strand break at the site of the removed base with both 3'- and 5'-phosphates. This is Formamidopyrimidine-DNA glycosylase from Cupriavidus pinatubonensis (strain JMP 134 / LMG 1197) (Cupriavidus necator (strain JMP 134)).